We begin with the raw amino-acid sequence, 57 residues long: Small ribosomal subunit protein bS21 (57 aa).

The protein belongs to the bacterial ribosomal protein bS21 family.

This chain is Small ribosomal subunit protein bS21, found in Geobacillus kaustophilus (strain HTA426).